We begin with the raw amino-acid sequence, 756 residues long: Xylosyl- and glucuronyltransferase LARGE1 (756 aa).

Residues 1 to 10 lie on the Cytoplasmic side of the membrane; sequence MLGICRGRRK. A helical; Signal-anchor for type II membrane protein transmembrane segment spans residues 11–31; that stretch reads FLAASLSLLCIPAITWIYLFS. At 32-756 the chain is on the lumenal side; sequence GSFEDGKPVS…LKYLTAENNS (725 aa). 2 disordered regions span residues 43-69 and 81-109; these read SPLE…EVRM and RQLS…EGTG. Residues 44–58 are compositionally biased toward polar residues; that stretch reads PLESQAHSPRYTASS. Residues 53 to 95 adopt a coiled-coil conformation; that stretch reads RYTASSQRERESLEVRMREVEEENRALRRQLSLAQGRAPSHRR. Over residues 59-69 the composition is skewed to basic and acidic residues; sequence QRERESLEVRM. N-linked (GlcNAc...) asparagine glycans are attached at residues Asn97, Asn122, and Asn148. The interval 138-413 is xylosyltransferase activity; sequence IHVAIVCAGY…FLEYDGNLLR (276 aa). The Mn(2+) site is built by Asp242 and Asp244. Residue Asn272 is glycosylated (N-linked (GlcNAc...) asparagine). The interval 414–756 is glucuronyltransferase activity; that stretch reads RELFGCPSEA…LKYLTAENNS (343 aa). Mn(2+) is bound by residues Asp563 and Asp565.

It in the C-terminal section; belongs to the glycosyltransferase 49 family. In the N-terminal section; belongs to the glycosyltransferase 8 family. As to quaternary structure, interacts with DAG1 (via the N-terminal domain of alpha-DAG1); the interaction increases binding of DAG1 to laminin. Interacts with B4GAT1. The cofactor is Mn(2+). As to expression, ubiquitous. Highest expression in heart, brain and skeletal muscle.

It is found in the golgi apparatus membrane. It carries out the reaction 3-O-[beta-D-GlcA-(1-&gt;3)-beta-D-Xyl-(1-&gt;4)-Rib-ol-P-Rib-ol-P-3-beta-D-GalNAc-(1-&gt;3)-beta-D-GlcNAc-(1-&gt;4)-(O-6-P-alpha-D-Man)]-Thr-[protein] + UDP-alpha-D-xylose = 3-O-[alpha-D-Xyl-(1-&gt;3)-beta-D-GlcA-(1-&gt;4)-beta-D-Xyl-(1-&gt;4)-Rib-ol-P-Rib-ol-P-3-beta-D-GalNAc-(1-&gt;3)-beta-D-GlcNAc-(1-&gt;4)-(O-6-P-alpha-D-Man)]-Thr-[protein] + UDP + H(+). It catalyses the reaction 3-O-{(1-&gt;[3)-alpha-D-Xyl-(1-&gt;3)-beta-D-GlcA-(1-&gt;](n)-4)-beta-D-Xyl-(1-&gt;4)-Rib-ol-P-Rib-ol-P-3-beta-D-GalNAc-(1-&gt;3)-beta-D-GlcNAc-(1-&gt;4)-O-6-P-alpha-D-Man}-L-Thr-[protein] + UDP-alpha-D-glucuronate = 3-O-{beta-D-GlcA-(1-&gt;[3)-alpha-D-Xyl-(1-&gt;3)-beta-D-GlcA-(1-&gt;](n)-4)-beta-D-Xyl-(1-&gt;4)-Rib-ol-P-Rib-ol-P-3-beta-D-GalNAc-(1-&gt;3)-beta-D-GlcNAc-(1-&gt;4)-O-6-P-alpha-D-Man}-L-Thr-[protein] + UDP + H(+). The enzyme catalyses 3-O-{beta-D-GlcA-(1-&gt;[3)-alpha-D-Xyl-(1-&gt;3)-beta-D-GlcA-(1-&gt;](n)-4)-beta-D-Xyl-(1-&gt;4)-Rib-ol-P-Rib-ol-P-3-beta-D-GalNAc-(1-&gt;3)-beta-D-GlcNAc-(1-&gt;4)-O-6-P-alpha-D-Man}-L-Thr-[protein] + UDP-alpha-D-xylose = 3-O-{(1-&gt;[3)-alpha-D-Xyl-(1-&gt;3)-beta-D-GlcA-(1-&gt;](n+1)-4)-beta-D-Xyl-(1-&gt;4)-Rib-ol-P-Rib-ol-P-3-beta-D-GalNAc-(1-&gt;3)-beta-D-GlcNAc-(1-&gt;4)-O-6-P-alpha-D-Man}-L-Thr-[protein] + UDP + H(+). The protein operates within protein modification; protein glycosylation. Its function is as follows. Bifunctional glycosyltransferase with both alpha-1,3-xylosyltransferase and beta-1,3-glucuronyltransferase activities involved in the maturation of alpha-dystroglycan (DAG1) by glycosylation leading to DAG1 binding to laminin G-like domain-containing extracellular proteins with high affinity. Elongates the glucuronyl-beta-1,4-xylose-beta disaccharide primer structure initiated by B4GAT1 by adding repeating units [-3-Xylose-alpha-1,3-GlcA-beta-1-] to produce a heteropolysaccharide. Requires the phosphorylation of core M3 (O-mannosyl trisaccharide) by POMK to elongate the glucuronyl-beta-1,4-xylose-beta disaccharide primer. Plays a key role in skeletal muscle function and regeneration. The sequence is that of Xylosyl- and glucuronyltransferase LARGE1 from Homo sapiens (Human).